A 1106-amino-acid polypeptide reads, in one-letter code: Voltage-dependent calcium channel subunit alpha-2/delta-1 (1106 aa).

A signal peptide spans methionine 1–glutamate 26. The Extracellular portion of the chain corresponds to glutamate 27–glycine 1076. A glycan (N-linked (GlcNAc...) asparagine) is linked at asparagine 94. Serine 121 is subject to Phosphoserine. Residues asparagine 138 and asparagine 186 are each glycosylated (N-linked (GlcNAc...) asparagine). A VWFA domain is found at aspartate 255 to leucine 432. A divalent metal cation-binding residues include aspartate 261, serine 263, and serine 265. The MIDAS-like motif signature appears at aspartate 261 to serine 265. N-linked (GlcNAc...) asparagine glycosylation is found at asparagine 326 and asparagine 350. A disulfide bridge connects residues cysteine 406 and cysteine 1062. A Cache domain is found at tryptophan 448–proline 539. Asparagine 615, asparagine 784, and asparagine 891 each carry an N-linked (GlcNAc...) asparagine glycan. Residues valine 1077–leucine 1097 form a helical membrane-spanning segment. Residues valine 1098 to leucine 1106 lie on the Cytoplasmic side of the membrane.

This sequence belongs to the calcium channel subunit alpha-2/delta family. Dimer formed of alpha-2-1 and delta-1 chains; disulfide-linked. Voltage-dependent calcium channels are multisubunit complexes, consisting of alpha-1 (CACNA1), alpha-2 (CACNA2D), beta (CACNB) and delta (CACNA2D) subunits in a 1:1:1:1 ratio. Proteolytically processed into subunits alpha-2-1 and delta-1 that are disulfide-linked. In terms of tissue distribution, skeletal muscle.

The protein localises to the membrane. It is found in the cell membrane. The alpha-2/delta subunit of voltage-dependent calcium channels regulates calcium current density and activation/inactivation kinetics of the calcium channel. Plays an important role in excitation-contraction coupling. The chain is Voltage-dependent calcium channel subunit alpha-2/delta-1 (CACNA2D1) from Oryctolagus cuniculus (Rabbit).